A 221-amino-acid polypeptide reads, in one-letter code: Pre-rRNA-processing protein SRD1 (221 aa).

Positions 101-110 (SKNRVTSACN) are enriched in polar residues. Disordered stretches follow at residues 101–121 (SKNR…QEAN) and 137–161 (ASIT…TILP). Basic residues predominate over residues 142 to 155 (KYSKKTTSRPKREK). A GATA-type zinc finger spans residues 168–193 (CSKCKDTWTIQWRSGPDQNRELCSPC). The segment at 201-221 (LKKENEKKRQAADKRIDRNNP) is disordered. Residues 203–221 (KENEKKRQAADKRIDRNNP) show a composition bias toward basic and acidic residues.

It localises to the cytoplasm. The protein localises to the nucleus. Functionally, plays a direct or indirect role in pre-rRNA processing. The protein is Pre-rRNA-processing protein SRD1 (SRD1) of Saccharomyces cerevisiae (strain ATCC 204508 / S288c) (Baker's yeast).